The primary structure comprises 289 residues: Acetyl-coenzyme A carboxylase carboxyl transferase subunit beta (289 aa).

Residues 28 to 289 (VMTKCPECKK…QGGEMAVWQS (262 aa)) enclose the CoA carboxyltransferase N-terminal domain. Residues cysteine 32, cysteine 35, cysteine 51, and cysteine 54 each contribute to the Zn(2+) site. A C4-type zinc finger spans residues 32–54 (CPECKKIMYTKELLKNLKVCVNC).

The protein belongs to the AccD/PCCB family. In terms of assembly, acetyl-CoA carboxylase is a heterohexamer composed of biotin carboxyl carrier protein (AccB), biotin carboxylase (AccC) and two subunits each of ACCase subunit alpha (AccA) and ACCase subunit beta (AccD). Requires Zn(2+) as cofactor.

The protein resides in the cytoplasm. It carries out the reaction N(6)-carboxybiotinyl-L-lysyl-[protein] + acetyl-CoA = N(6)-biotinyl-L-lysyl-[protein] + malonyl-CoA. Its pathway is lipid metabolism; malonyl-CoA biosynthesis; malonyl-CoA from acetyl-CoA: step 1/1. In terms of biological role, component of the acetyl coenzyme A carboxylase (ACC) complex. Biotin carboxylase (BC) catalyzes the carboxylation of biotin on its carrier protein (BCCP) and then the CO(2) group is transferred by the transcarboxylase to acetyl-CoA to form malonyl-CoA. This is Acetyl-coenzyme A carboxylase carboxyl transferase subunit beta from Bacillus cereus (strain ATCC 14579 / DSM 31 / CCUG 7414 / JCM 2152 / NBRC 15305 / NCIMB 9373 / NCTC 2599 / NRRL B-3711).